We begin with the raw amino-acid sequence, 310 residues long: 4-hydroxyproline 2-epimerase (310 aa).

The Proton acceptor role is filled by Cys-88. Residues 89–90, His-208, and Asp-232 contribute to the substrate site; that span reads GH. Cys-236 acts as the Proton donor in catalysis. 237–238 contributes to the substrate binding site; that stretch reads GT.

Belongs to the proline racemase family.

It catalyses the reaction trans-4-hydroxy-L-proline = cis-4-hydroxy-D-proline. Catalyzes the epimerization of trans-4-hydroxy-L-proline (t4LHyp) to cis-4-hydroxy-D-proline (c4DHyp). Is likely involved in a degradation pathway that converts t4LHyp to alpha-ketoglutarate. Displays no proline racemase activity. The sequence is that of 4-hydroxyproline 2-epimerase from Acinetobacter baumannii (strain AYE).